We begin with the raw amino-acid sequence, 410 residues long: Replication factor C large subunit (410 aa).

46–53 (GDPGTGKT) lines the ATP pocket.

This sequence belongs to the activator 1 small subunits family. RfcL subfamily. As to quaternary structure, heteromultimer composed of small subunits (RfcS) and large subunits (RfcL).

Functionally, part of the RFC clamp loader complex which loads the PCNA sliding clamp onto DNA. This chain is Replication factor C large subunit, found in Picrophilus torridus (strain ATCC 700027 / DSM 9790 / JCM 10055 / NBRC 100828 / KAW 2/3).